The primary structure comprises 199 residues: Fe/S biogenesis protein NfuA (199 aa).

Residues Cys-151 and Cys-154 each contribute to the [4Fe-4S] cluster site.

This sequence belongs to the NfuA family. As to quaternary structure, homodimer. [4Fe-4S] cluster is required as a cofactor.

Its function is as follows. Involved in iron-sulfur cluster biogenesis. Binds a 4Fe-4S cluster, can transfer this cluster to apoproteins, and thereby intervenes in the maturation of Fe/S proteins. Could also act as a scaffold/chaperone for damaged Fe/S proteins. The polypeptide is Fe/S biogenesis protein NfuA (Stenotrophomonas maltophilia (strain K279a)).